The primary structure comprises 282 residues: MESRMWPALLLSHLLPLWPLLLLPLPPPAQGSSSSPRTPPAPARPPCARGGPSAPRHVCVWERAPPPSRSPRVPRSRRQVLPGTAPPATPSGFEEGPPSSQYPWAIVWGPTVSREDGGDPNSANPGFLDYGFAAPHGLATPHPNSDSMRGDGDGLILGEAPATLRPFLFGGRGEGVDPQLYVTITISIIIVLVATGIIFKFCWDRSQKRRRPSGQQGALRQEESQQPLTDLSPAGVTVLGAFGDSPTPTPDHEEPRGGPRPGMPHPKGAPAFQLNRIPLVNL.

The N-terminal stretch at 1–31 (MESRMWPALLLSHLLPLWPLLLLPLPPPAQG) is a signal peptide. Residues 28–99 (PAQGSSSSPR…PSGFEEGPPS (72 aa)) form a disordered region. Residues 32–178 (SSSSPRTPPA…FGGRGEGVDP (147 aa)) lie on the Extracellular side of the membrane. Residues 46 to 56 (PCARGGPSAPR) are compositionally biased toward low complexity. Residue threonine 140 is glycosylated (O-linked (GalNAc...) threonine). Residues 179–199 (QLYVTITISIIIVLVATGIIF) form a helical membrane-spanning segment. At 200–282 (KFCWDRSQKR…QLNRIPLVNL (83 aa)) the chain is on the cytoplasmic side. The disordered stretch occupies residues 209 to 282 (RRRPSGQQGA…QLNRIPLVNL (74 aa)). The segment covering 213-229 (SGQQGALRQEESQQPLT) has biased composition (polar residues).

In terms of processing, O-glycosylation at Thr-140 is essential for recognition by PILRA. As to expression, mainly expressed in adult brain and cerebellum. Weaker expression in fetal brain and virtually no expression in spleen, heart, kidney, liver and dorsal ganglion relative to brain.

The protein localises to the membrane. Functionally, acts as a ligand for PILRA in neural tissues, where it may be involved in immune regulation. The chain is PILR alpha-associated neural protein (PIANP) from Homo sapiens (Human).